Consider the following 130-residue polypeptide: Small ribosomal subunit protein uS8 (130 aa).

The protein belongs to the universal ribosomal protein uS8 family. As to quaternary structure, part of the 30S ribosomal subunit. Contacts proteins S5 and S12.

Functionally, one of the primary rRNA binding proteins, it binds directly to 16S rRNA central domain where it helps coordinate assembly of the platform of the 30S subunit. The protein is Small ribosomal subunit protein uS8 of Yersinia pseudotuberculosis serotype O:1b (strain IP 31758).